The sequence spans 405 residues: Chalcone synthase (405 aa).

Cys-170 is a catalytic residue.

The protein belongs to the thiolase-like superfamily. Chalcone/stilbene synthases family.

The catalysed reaction is (E)-4-coumaroyl-CoA + 3 malonyl-CoA + 3 H(+) = 2',4,4',6'-tetrahydroxychalcone + 3 CO2 + 4 CoA. The protein operates within secondary metabolite biosynthesis; flavonoid biosynthesis. Its function is as follows. The primary product of this enzyme is 4,2',4',6'-tetrahydroxychalcone (also termed naringenin-chalcone or chalcone) which can under specific conditions spontaneously isomerize into naringenin. This is Chalcone synthase (CHS) from Equisetum arvense (Field horsetail).